Reading from the N-terminus, the 784-residue chain is DNA repair and recombination protein RAD54-like (784 aa).

Positions 2-9 (RRSLAPSQ) are required for chromatin remodeling, strand pairing activities and coupling of ATPase activity. Residue threonine 22 is modified to Phosphothreonine. The Helicase ATP-binding domain occupies 169–344 (EGKKGNFNGC…FSLVNFVNPE (176 aa)). 182 to 189 (DEMGLGKT) is an ATP binding site. Residues 295 to 298 (DEGH) carry the DEGH box motif. The 158-residue stretch at 501-658 (LLDFMLATIR…NNESAEKHFT (158 aa)) folds into the Helicase C-terminal domain. The tract at residues 742–784 (QAIKESEETKQEAEDTSIPAKSKRKRSTTPESDDCNDEDFKGF) is disordered. The span at 745–754 (KESEETKQEA) shows a compositional bias: basic and acidic residues.

Belongs to the SNF2/RAD54 helicase family. As to quaternary structure, interacts (via N-terminus) with spn-A/Rad51.

The protein resides in the nucleus. Functionally, involved in mitotic DNA repair and meiotic recombination. Functions in the recombinational DNA repair pathway. Essential for interhomolog gene conversion (GC), but may have a less important role in intersister GC than spn-A/Rad51. In the presence of DNA, spn-A/Rad51 enhances the ATPase activity of okr/Rad54. The sequence is that of DNA repair and recombination protein RAD54-like from Drosophila willistoni (Fruit fly).